Here is a 142-residue protein sequence, read N- to C-terminus: Putative pre-16S rRNA nuclease (142 aa).

Belongs to the YqgF nuclease family.

The protein localises to the cytoplasm. Could be a nuclease involved in processing of the 5'-end of pre-16S rRNA. In Staphylococcus saprophyticus subsp. saprophyticus (strain ATCC 15305 / DSM 20229 / NCIMB 8711 / NCTC 7292 / S-41), this protein is Putative pre-16S rRNA nuclease.